The sequence spans 112 residues: Ig kappa chain V-II region 2S1.3 (112 aa).

A framework-1 region spans residues 1-23; that stretch reads DIVMTQAAFSNPVTLGTSASFSC. A disulfide bridge links C23 with C93. Residues 24 to 39 form a complementarity-determining-1 region; sequence RSSKSLQQSKGITYLY. A framework-2 region spans residues 40–54; the sequence is WYLQKPGQSPQLLIY. Positions 55-61 are complementarity-determining-2; sequence QMSNLAS. A framework-3 region spans residues 62 to 93; it reads GVPDRFSGSGSGTDFTLRISRVEAEDVGVYYC. Residues 94 to 102 are complementarity-determining-3; it reads ANLQELPYT. A framework-4 region spans residues 103–112; sequence FGGGTKLEIK.

This chain is Ig kappa chain V-II region 2S1.3, found in Mus musculus (Mouse).